The chain runs to 585 residues: Aspartate--tRNA(Asp/Asn) ligase (585 aa).

Glu173 provides a ligand contact to L-aspartate. An aspartate region spans residues 197 to 200; that stretch reads QLFK. Arg219 contacts L-aspartate. Residues 219–221 and Gln228 contribute to the ATP site; that span reads RDE. His447 contacts L-aspartate. An ATP-binding site is contributed by Glu477. An L-aspartate-binding site is contributed by Arg484. 529 to 532 contributes to the ATP binding site; that stretch reads GFDR.

The protein belongs to the class-II aminoacyl-tRNA synthetase family. Type 1 subfamily. In terms of assembly, homodimer.

It localises to the cytoplasm. It catalyses the reaction tRNA(Asx) + L-aspartate + ATP = L-aspartyl-tRNA(Asx) + AMP + diphosphate. Aspartyl-tRNA synthetase with relaxed tRNA specificity since it is able to aspartylate not only its cognate tRNA(Asp) but also tRNA(Asn). Reaction proceeds in two steps: L-aspartate is first activated by ATP to form Asp-AMP and then transferred to the acceptor end of tRNA(Asp/Asn). The protein is Aspartate--tRNA(Asp/Asn) ligase of Campylobacter concisus (strain 13826).